Here is a 430-residue protein sequence, read N- to C-terminus: Small ribosomal subunit protein uS5m (430 aa).

The disordered stretch occupies residues 108-128; it reads AGARKGRGKRTKRKRRKDLNR. A compositionally biased stretch (basic residues) spans 111–125; that stretch reads RKGRGKRTKRKRRKD. In terms of domain architecture, S5 DRBM spans 218 to 282; the sequence is FDTRILEVRN…NRAVHYLHYI (65 aa).

The protein belongs to the universal ribosomal protein uS5 family. As to quaternary structure, component of the mitochondrial ribosome small subunit (28S) which comprises a 12S rRNA and about 30 distinct proteins.

It is found in the mitochondrion. This chain is Small ribosomal subunit protein uS5m (MRPS5), found in Bos taurus (Bovine).